The following is a 765-amino-acid chain: Protein transport protein Sec23A (765 aa).

Thr2 is subject to N-acetylthreonine. Positions 61, 66, 85, and 88 each coordinate Zn(2+). Thr308 carries the phosphothreonine modification. Residues 632–718 (PEPVLLDSSS…EHGGSQARFL (87 aa)) form a Gelsolin-like repeat.

This sequence belongs to the SEC23/SEC24 family. SEC23 subfamily. COPII is composed of at least five proteins: the Sec23/24 complex, the Sec13/31 complex and Sar1. Interacts with SEC23IP. Interacts with HTR4. Interacts with SEC16A. Interacts with SLC6A4. Interacts (as part of the Sec23/24 complex) with SEC22B; recruits SEC22B into COPII-coated vesicles and allows the transport of this cargo from the endoplasmic reticulum to the Golgi. Interacts (via Gelsolin-like repeat) with MIA2 and MIA3; specifically involved in the transport of large cargos like the collagen COL7A1. Interacts with DDHD1. Interacts with TMEM39A. Interacts with SACM1L; this interaction is reduced in the absence of TMEM39A. Interacts with kinase FAM20C; transport of FAM20C from the endoplasmic reticulum to the Golgi is likely to be mediated by COPII vesicles.

It is found in the cytoplasmic vesicle. It localises to the COPII-coated vesicle membrane. Its subcellular location is the endoplasmic reticulum membrane. The protein localises to the cytoplasm. The protein resides in the cytosol. Component of the coat protein complex II (COPII) which promotes the formation of transport vesicles from the endoplasmic reticulum (ER). The coat has two main functions, the physical deformation of the endoplasmic reticulum membrane into vesicles and the selection of cargo molecules for their transport to the Golgi complex. Required for the translocation of insulin-induced glucose transporter SLC2A4/GLUT4 to the cell membrane. The chain is Protein transport protein Sec23A from Pongo abelii (Sumatran orangutan).